The following is a 29-amino-acid chain: Dermaseptin-9TR (29 aa).

Expressed by the skin glands.

The protein resides in the secreted. Its function is as follows. Has antimicrobial activity. This is Dermaseptin-9TR from Phyllomedusa trinitatis (Trinidad leaf frog).